We begin with the raw amino-acid sequence, 485 residues long: Aspartyl/glutamyl-tRNA(Asn/Gln) amidotransferase subunit B (485 aa).

Belongs to the GatB/GatE family. GatB subfamily. Heterotrimer of A, B and C subunits.

The catalysed reaction is L-glutamyl-tRNA(Gln) + L-glutamine + ATP + H2O = L-glutaminyl-tRNA(Gln) + L-glutamate + ADP + phosphate + H(+). It carries out the reaction L-aspartyl-tRNA(Asn) + L-glutamine + ATP + H2O = L-asparaginyl-tRNA(Asn) + L-glutamate + ADP + phosphate + 2 H(+). Allows the formation of correctly charged Asn-tRNA(Asn) or Gln-tRNA(Gln) through the transamidation of misacylated Asp-tRNA(Asn) or Glu-tRNA(Gln) in organisms which lack either or both of asparaginyl-tRNA or glutaminyl-tRNA synthetases. The reaction takes place in the presence of glutamine and ATP through an activated phospho-Asp-tRNA(Asn) or phospho-Glu-tRNA(Gln). This chain is Aspartyl/glutamyl-tRNA(Asn/Gln) amidotransferase subunit B, found in Borreliella afzelii (strain PKo) (Borrelia afzelii).